Here is a 660-residue protein sequence, read N- to C-terminus: Solute carrier family 5 member 4 (660 aa).

The Cytoplasmic segment spans residues Met1–Asp28. A helical transmembrane segment spans residues Ile29–Met47. The Extracellular segment spans residues Leu48–Asp64. The chain crosses the membrane as a helical span at residues Val65–Val85. Residues Gly86–Ala105 lie on the Cytoplasmic side of the membrane. A helical transmembrane segment spans residues Leu106 to Met126. The Extracellular portion of the chain corresponds to Thr127–Leu171. Residues Ala172–Tyr191 form a helical membrane-spanning segment. The Cytoplasmic segment spans residues Thr192–Thr208. Residues Ile209–Tyr229 traverse the membrane as a helical segment. Residues Glu230 to Val270 are Extracellular-facing. An N-linked (GlcNAc...) asparagine glycan is attached at Asn248. A helical transmembrane segment spans residues Thr271–Trp291. Topologically, residues Cys292–Cys314 are cytoplasmic. A helical transmembrane segment spans residues Ile315–Ile334. The Extracellular segment spans residues Ser335–Leu423. Residues Ile424–Leu443 traverse the membrane as a helical segment. Over Val444–Tyr455 the chain is Cytoplasmic. A helical membrane pass occupies residues Ile456–Phe476. The Extracellular portion of the chain corresponds to Cys477–Tyr526. A helical membrane pass occupies residues Leu527–Leu547. At Thr548–Lys638 the chain is on the cytoplasmic side. A helical membrane pass occupies residues Thr639–Phe659.

It belongs to the sodium:solute symporter (SSF) (TC 2.A.21) family. As to expression, kidney, intestine, liver, skeletal muscle and spleen.

Its subcellular location is the cell membrane. It carries out the reaction D-glucose(out) + 2 Na(+)(out) = D-glucose(in) + 2 Na(+)(in). Its activity is regulated as follows. Inhibited by phlorizin. In terms of biological role, low-affinity sodium/D-glucose symporter with a great selectivity for sugars (D-glucose &gt;&gt; D-galactose). Na(+) and D-glucose transport are tightly coupled at neutral pH, but at acidic pH, ion transport is uncoupled from sugar transport. The chain is Solute carrier family 5 member 4 from Sus scrofa (Pig).